Consider the following 298-residue polypeptide: NAD kinase (298 aa).

Asp80 serves as the catalytic Proton acceptor. NAD(+)-binding positions include Asp80 to Gly81, Asn154 to Asp155, Arg182, Asp184, Thr195 to Ser200, Ala219, and Gln253.

Belongs to the NAD kinase family. The cofactor is a divalent metal cation.

The protein resides in the cytoplasm. It carries out the reaction NAD(+) + ATP = ADP + NADP(+) + H(+). In terms of biological role, involved in the regulation of the intracellular balance of NAD and NADP, and is a key enzyme in the biosynthesis of NADP. Catalyzes specifically the phosphorylation on 2'-hydroxyl of the adenosine moiety of NAD to yield NADP. The protein is NAD kinase of Acidovorax sp. (strain JS42).